A 300-amino-acid polypeptide reads, in one-letter code: Geranyl diphosphate 2-C-methyltransferase (300 aa).

Residues 1–24 (MAAASAPVPGPGGASSTARGRIPA) form a disordered region.

This sequence belongs to the geranyl diphosphate 2-C-methyltransferase family. Mg(2+) serves as cofactor.

It catalyses the reaction (2E)-geranyl diphosphate + S-adenosyl-L-methionine = (E)-2-methylgeranyl diphosphate + S-adenosyl-L-homocysteine + H(+). Its function is as follows. Catalyzes the SAM-dependent methylation of geranyl diphosphate (GPP) to yield (E)-2-methylgeranyl diphosphate (2-MeGPP). This is Geranyl diphosphate 2-C-methyltransferase (gdpmt) from Streptomyces lasalocidi (Streptomyces lasaliensis).